The following is a 305-amino-acid chain: tRNA N6-adenosine threonylcarbamoyltransferase (305 aa).

The Fe cation site is built by His-108 and His-112. Substrate-binding positions include 130 to 134, Asp-163, Gly-176, Asp-180, and Asn-264; that span reads VVSGG. Asp-288 provides a ligand contact to Fe cation.

The protein belongs to the KAE1 / TsaD family. It depends on Fe(2+) as a cofactor.

The protein resides in the cytoplasm. The catalysed reaction is L-threonylcarbamoyladenylate + adenosine(37) in tRNA = N(6)-L-threonylcarbamoyladenosine(37) in tRNA + AMP + H(+). Required for the formation of a threonylcarbamoyl group on adenosine at position 37 (t(6)A37) in tRNAs that read codons beginning with adenine. Is involved in the transfer of the threonylcarbamoyl moiety of threonylcarbamoyl-AMP (TC-AMP) to the N6 group of A37, together with TsaE and TsaB. TsaD likely plays a direct catalytic role in this reaction. The polypeptide is tRNA N6-adenosine threonylcarbamoyltransferase (Mycoplasma mobile (strain ATCC 43663 / 163K / NCTC 11711) (Mesomycoplasma mobile)).